Here is a 368-residue protein sequence, read N- to C-terminus: MFYWLIDLSNTVPGLSIFKPMLNVFRYITFRTGGAMVTGALFVFLFGPWIIDNLRLRQGKGQPIRADGPQSHLVSKKGTPTMGGLMILSGLVVSTVLWANPLNPYVWIVLAVTLGFGFIGFYDDYLKVTKQTHAGFAGRTRLLLELLIALAACYALIRLGREPFSTALVIPFFKDVVVDLGWFFLAFGAFIIVGAGNAVNLTDGLDGLAIVPVMIAAASFGMIAYLAGNAVFADYLQINYIAGTGELAVLCGAVLGAGLGFLWFNAPPASIFMGDTGSLALGGMLGSIAVAVKHEIVLAVIGGLFVLEAVSVIVQVASFKLTGKRIFKMAPIHHHFEQLGWTEPQIVIRFWIISVMLALAGLSTLKLR.

Helical transmembrane passes span 32–52 (TGGA…WIID), 79–99 (TPTM…VLWA), 102–122 (LNPY…IGFY), 140–160 (TRLL…IRLG), 176–196 (VVVD…VGAG), 207–227 (GLAI…AYLA), 247–267 (LAVL…FNAP), 271–291 (IFMG…IAVA), 296–316 (IVLA…IVQV), and 345–365 (QIVI…LSTL).

It belongs to the glycosyltransferase 4 family. MraY subfamily. Mg(2+) serves as cofactor.

It is found in the cell inner membrane. The enzyme catalyses UDP-N-acetyl-alpha-D-muramoyl-L-alanyl-gamma-D-glutamyl-meso-2,6-diaminopimeloyl-D-alanyl-D-alanine + di-trans,octa-cis-undecaprenyl phosphate = di-trans,octa-cis-undecaprenyl diphospho-N-acetyl-alpha-D-muramoyl-L-alanyl-D-glutamyl-meso-2,6-diaminopimeloyl-D-alanyl-D-alanine + UMP. Its pathway is cell wall biogenesis; peptidoglycan biosynthesis. Functionally, catalyzes the initial step of the lipid cycle reactions in the biosynthesis of the cell wall peptidoglycan: transfers peptidoglycan precursor phospho-MurNAc-pentapeptide from UDP-MurNAc-pentapeptide onto the lipid carrier undecaprenyl phosphate, yielding undecaprenyl-pyrophosphoryl-MurNAc-pentapeptide, known as lipid I. The chain is Phospho-N-acetylmuramoyl-pentapeptide-transferase from Nitrobacter hamburgensis (strain DSM 10229 / NCIMB 13809 / X14).